A 284-amino-acid chain; its full sequence is Avenin-like b5 (284 aa).

The first 18 residues, 1–18 (MKVFILALLALTATTAIA), serve as a signal peptide directing secretion.

It belongs to the prolamin family. Contains disulfide bonds. Expressed only in developing endosperms. Not detected in roots, stems or leaves.

Functionally, seed storage protein. Might be integrated via inter-chain disulfide bonds within the glutenin polymer. This is Avenin-like b5 from Triticum aestivum (Wheat).